Consider the following 579-residue polypeptide: UPF0329 protein ECU06_1620 (579 aa).

Disordered regions lie at residues 325–360 (EEKAKGRKDGKKKSVNVSEVKEEESETEEVEAGEEA) and 370–389 (ARRKTGKKSRGGRKRYKIHK). A compositionally biased stretch (basic residues) spans 329–338 (KGRKDGKKKS). Residues 345–360 (KEEESETEEVEAGEEA) are compositionally biased toward acidic residues.

It belongs to the UPF0329 family.

This chain is UPF0329 protein ECU06_1620, found in Encephalitozoon cuniculi (strain GB-M1) (Microsporidian parasite).